The chain runs to 347 residues: L-Ala-D/L-amino acid epimerase (347 aa).

Substrate is bound at residue 156 to 158 (KLK). Residues Asp183, Glu211, and Asp237 each coordinate Mg(2+). Residues Lys259 and 309 to 311 (DID) contribute to the substrate site.

This sequence belongs to the mandelate racemase/muconate lactonizing enzyme family. Mg(2+) serves as cofactor.

Dipeptide epimerase with a broad substrate specificity. Catalyzes the epimerization of L-Ala-L-Ala, L-Ala-L-Ser, L-Ala-L-Thr, L-Ala-L-Met, L-Ala-L-Phe, L-Ala-L-Tyr, L-Gly-L-Asp, L-Val-L-Asp, L-Val-L-Glu and L-Val-L-Phe (in vitro). Can also catalyze the epimerization of L-Ala-L-Glu, but with lower efficiency. The protein is L-Ala-D/L-amino acid epimerase of Pedosphaera parvula (strain Ellin514).